The sequence spans 105 residues: MARSLCFMAFAILAMMLFVAYEVQARECKTESNTFPGICITKPPCRKACISEKFTDGHCSKILRRCLCTKPCVFDEKMTKTGAEILAEEAKTLAAALLEEEIMDN.

A signal peptide spans 1–25 (MARSLCFMAFAILAMMLFVAYEVQA). 4 disulfide bridges follow: cysteine 28–cysteine 72, cysteine 39–cysteine 59, cysteine 45–cysteine 66, and cysteine 49–cysteine 68. The propeptide at 73-105 (VFDEKMTKTGAEILAEEAKTLAAALLEEEIMDN) is removed in mature form.

The protein belongs to the DEFL family. As to expression, most abundant in the epidermal cell layers of the petals and sepals, within the connective cells of the anthers, and the cortical cells of the style. Not detected in the tapetum, pollen mother cells, the transmitting tissue, the vascular bundles of the anther and style or in leaves. Expressed also in ovaries, but barley detectable in roots.

The protein resides in the secreted. It localises to the vacuole. Plant defense peptide with antifungal activity against F.oxysporum and B.cinerea. Retards the growth of the Lepidopteran insect pests H.armigera and H.punctigera. The polypeptide is Flower-specific defensin (D1) (Nicotiana alata (Winged tobacco)).